Reading from the N-terminus, the 942-residue chain is ATP-dependent RNA helicase DDX42 (942 aa).

Positions 1–18 (MNWNKGGPGTKRGFGFGG) are enriched in gly residues. Residues 1–114 (MNWNKGGPGT…KPIDSDSDDD (114 aa)) form a disordered region. K5 carries the N6-acetyllysine modification. At R12 the chain carries Omega-N-methylarginine. Residues 35-52 (SHSAFGATSSSSGFGKSA) are compositionally biased toward low complexity. The residue at position 58 (S58) is a Phosphoserine. Acidic residues predominate over residues 70–84 (DEENAYFEDEEEDSS). Phosphoserine is present on residues S96, S104, S109, and S111. Positions 116–157 (LEAFMAEVEDQAARDMKRLEEKDKERKNVKGIRDDIEEEDDQ) form a coiled coil. Positions 182–203 (EYDSDGNPIAPTKKIIDPLPPI) are disordered. S185 is modified (phosphoserine). The Q motif signature appears at 253-281 (SSFAHFGFDEQLMHQIRKSEYTQPTPIQC). The region spanning 284–459 (VPVALSGRDM…RDILIDPIRV (176 aa)) is the Helicase ATP-binding domain. 297-304 (AKTGSGKT) provides a ligand contact to ATP. The DEAD box motif lies at 407–410 (DEAD). One can recognise a Helicase C-terminal domain in the interval 487 to 632 (WLTRRLVEFT…HVSKELLDLA (146 aa)). Composition is skewed to polar residues over residues 737–760 (LNSV…TSAT) and 786–798 (GVNN…NSRE). Disordered stretches follow at residues 737 to 762 (LNSV…ATKG) and 783 to 942 (GAQG…RWDS). The necessary for interaction with TP53BP2 stretch occupies residues 738 to 833 (NSVPTNSAQQ…TGNRHSDSPR (96 aa)). S754 is subject to Phosphoserine. The segment covering 820 to 924 (SHGETGNRHS…KVDSKTDKTA (105 aa)) has biased composition (basic and acidic residues). A Glycyl lysine isopeptide (Lys-Gly) (interchain with G-Cter in SUMO2) cross-link involves residue K899.

It belongs to the DEAD box helicase family. DDX42 subfamily. As to quaternary structure, transient component of the SF3B subcomplex of the 17S U2 SnRNP complex. Interacts (via the C-terminus) with TP53BP2; the interaction is not inhibitied by TP53BP2 ubiquitination and is independent of p53/TP53.

The protein localises to the cytoplasm. The protein resides in the nucleus. It catalyses the reaction ATP + H2O = ADP + phosphate + H(+). Functionally, ATP-dependent RNA helicase that binds to partially double-stranded RNAs (dsRNAs) in order to unwind RNA secondary structures. Unwinding is promoted in the presence of single-strand binding proteins. Also mediates RNA duplex formation thereby displacing the single-strand RNA binding protein. ATP and ADP modulate its activity: ATP binding and hydrolysis by DDX42 triggers RNA strand separation, whereas the ADP-bound form of the protein triggers annealing of complementary RNA strands. Required for assembly of the 17S U2 SnRNP complex of the spliceosome, a large ribonucleoprotein complex that removes introns from transcribed pre-mRNAs: DDX42 associates transiently with the SF3B subcomplex of the 17S U2 SnRNP complex and is released after fulfilling its role in the assembly of 17S U2 SnRNP. Involved in the survival of cells by interacting with TP53BP2 and thereby counteracting the apoptosis-stimulating activity of TP53BP2. Relocalizes TP53BP2 to the cytoplasm. In Pongo abelii (Sumatran orangutan), this protein is ATP-dependent RNA helicase DDX42 (DDX42).